Reading from the N-terminus, the 689-residue chain is Glycine--tRNA ligase beta subunit (689 aa).

The protein belongs to the class-II aminoacyl-tRNA synthetase family. In terms of assembly, tetramer of two alpha and two beta subunits.

The protein localises to the cytoplasm. The catalysed reaction is tRNA(Gly) + glycine + ATP = glycyl-tRNA(Gly) + AMP + diphosphate. This chain is Glycine--tRNA ligase beta subunit, found in Shigella flexneri serotype 5b (strain 8401).